The following is a 613-amino-acid chain: Probable hydrolase clz13 (613 aa).

Residues 1 to 25 form the signal peptide; the sequence is MCLLSMRFTVAILLVLLSHCGGSHA. N-linked (GlcNAc...) asparagine glycans are attached at residues N61, N89, N286, N422, N456, N477, and N581.

The protein belongs to the beta-lactamase family.

It functions in the pathway secondary metabolite biosynthesis. Probable hydrolase; part of the gene cluster that mediates the biosynthesis of squalestatin S1 (SQS1, also known as zaragozic acid A), a heavily oxidized fungal polyketide that offers potent cholesterol lowering activity by targeting squalene synthase (SS). SQS1 is composed of a 2,8-dioxobicyclic[3.2.1]octane-3,4,5-tricarboxyclic acid core that is connected to two lipophilic polyketide arms. These initial steps feature the priming of an unusual benzoic acid starter unit onto the highly reducing polyketide synthase clz14, followed by oxaloacetate extension and product release to generate a tricarboxylic acid containing product. The phenylalanine ammonia lyase (PAL) clz10 and the acyl-CoA ligase clz12 are involved in transforming phenylalanine into benzoyl-CoA. The citrate synthase-like protein clz17 is involved in connecting the C-alpha-carbons of the hexaketide chain and oxaloacetate to afford the tricarboxylic acid unit. The potential hydrolytic enzymes, clz11 and clz13, are in close proximity to pks2 and may participate in product release. On the other side, the tetraketide arm is synthesized by a the squalestatin tetraketide synthase clz2 and enzymatically esterified to the core in the last biosynthetic step, by the acetyltransferase clz6. The biosynthesis of the tetraketide must involve 3 rounds of chain extension. After the first and second rounds methyl-transfer occurs, and in all rounds of extension the ketoreductase and dehydratase are active. The enoyl reductase and C-MeT of clz2 are not active in the final round of extension. The acetyltransferase clz6 appears to have a broad substrate selectivity for its acyl CoA substrate, allowing the in vitro synthesis of novel squalestatins. The biosynthesis of SQS1 requires several oxidative steps likely performed by oxidoreductases clz3, clz15 and clz16. Finally, in support of the identification of the cluster as being responsible for SQS1 production, the cluster contains a gene encoding a putative squalene synthase (SS) clz20, suggesting a likely mechanism for self-resistance. This Cochliobolus lunatus (Filamentous fungus) protein is Probable hydrolase clz13.